A 445-amino-acid polypeptide reads, in one-letter code: Cytochrome P450 monooxygenase penB (445 aa).

Heme is bound at residue Cys-381.

Belongs to the cytochrome P450 family. Heme is required as a cofactor.

It participates in secondary metabolite biosynthesis. The protein operates within alkaloid biosynthesis. Its pathway is mycotoxin biosynthesis. In terms of biological role, cytochrome P450 monooxygenase; part of the gene cluster that mediates the biosynthesis of penigequinolones, potent insecticidal alkaloids that contain a highly modified 10-carbon prenyl group. The first stage is catalyzed by the nonribosomal peptide synthetase penN that condenses anthranilic acid and O-methyl-L-tyrosine to produce 4'-methoxycyclopeptin. 4'-methoxycyclopeptin is then converted to 4'-methoxydehydrocyclopeptin by the ketoglutarate-dependent dioxygenase penM through dehydrogenation to form a double bond between C-alpha and C-beta of the O-methyltyrosine side chain. PenM also converts its first product methoxydehydrocyclopeptin to 4'-methoxycyclopenin. The following conversion of 4'methoxycyclopenin into 4'-methoxyviridicatin is catalyzed by the cyclopenase penL. 4'-methoxyviridicatin is the precursor of quinolone natural products, and is further converted to quinolinone B. The prenyltransferase penI then catalyzes the canonical Friedel-Crafts alkylation of quinolinone B with dimethylallyl cation to yield dimethylallyl quinolone, which is subjected to FAD-dependent dehydrogenation by the FAD-linked oxidoreductase penH to yield conjugated aryl diene. The delta(3') double bond then serves as the site of the second alkylation with DMAPP catalyzed by the prenyltransferase penG to yield a carbenium ion intermediate, which can be attacked by H(2)O to yield a styrenyl quinolone containing a C3'-hydroxyprenyl chain, or undergo cyclization to yield yaequinolones J1 and J2. The conversion of the styrenyl quinolone into the tetrahydrofuran-containing yaequinolone C is performed by the FAD-dependent monooxygenase penE and involves epoxidation of the terminal C7'-C8' olefin, followed by epoxide ring opening initiated by the C3' hydroxyl group. The predicted cysteine hydrolase penJ acts as an epoxide hydrolase that enhances the rate of the 5-exo-tet cyclization step, increasing the yield of yaequinolone C. PenF catalyzes the cationic rearrangement of the epoxide formed by penE (before ring opening to produce yaequinolone C) into yaequinolone D. Finally, the short-chain dehydrogenase/reductase (SDR)-like reductase penD, catalyzes both the dehydration of yaequinolone D and the reduction of the resulting oxonium to yield penigequinolone. The chain is Cytochrome P450 monooxygenase penB from Penicillium thymicola.